A 149-amino-acid chain; its full sequence is Transcriptional repressor NrdR (149 aa).

Residues cysteine 3–cysteine 34 fold into a zinc finger. An ATP-cone domain is found at proline 49–glutamate 139.

Belongs to the NrdR family. Zn(2+) is required as a cofactor.

Its function is as follows. Negatively regulates transcription of bacterial ribonucleotide reductase nrd genes and operons by binding to NrdR-boxes. This is Transcriptional repressor NrdR from Acidovorax sp. (strain JS42).